The primary structure comprises 334 residues: Glyoxylate reductase (334 aa).

NADP(+) is bound by residues 158-161, 180-182, and 239-241; these read LGRI, SRT, and IAR. Catalysis depends on residues R241 and E270. Residue H288 is the Proton donor of the active site. Residue 288–290 participates in NADP(+) binding; the sequence is HIG.

Belongs to the D-isomer specific 2-hydroxyacid dehydrogenase family. GyaR subfamily. In terms of assembly, homodimer.

It is found in the cytoplasm. The catalysed reaction is glycolate + NAD(+) = glyoxylate + NADH + H(+). This chain is Glyoxylate reductase (gyaR), found in Pyrococcus horikoshii (strain ATCC 700860 / DSM 12428 / JCM 9974 / NBRC 100139 / OT-3).